A 173-amino-acid chain; its full sequence is Ribosome maturation factor RimM (173 aa).

In terms of domain architecture, PRC barrel spans 95 to 169; it reads DPDEFYDHQL…VIEIDPPEGL (75 aa).

It belongs to the RimM family. As to quaternary structure, binds ribosomal protein uS19.

The protein resides in the cytoplasm. Its function is as follows. An accessory protein needed during the final step in the assembly of 30S ribosomal subunit, possibly for assembly of the head region. Essential for efficient processing of 16S rRNA. May be needed both before and after RbfA during the maturation of 16S rRNA. It has affinity for free ribosomal 30S subunits but not for 70S ribosomes. The protein is Ribosome maturation factor RimM of Mycobacteroides abscessus (strain ATCC 19977 / DSM 44196 / CCUG 20993 / CIP 104536 / JCM 13569 / NCTC 13031 / TMC 1543 / L948) (Mycobacterium abscessus).